The chain runs to 942 residues: Diacylglycerol kinase theta (942 aa).

Positions Met-1–Pro-59 are disordered. Ser-22 and Ser-26 each carry phosphoserine. The segment covering Pro-45–Pro-59 has biased composition (low complexity). 3 Phorbol-ester/DAG-type zinc fingers span residues Gly-60–Cys-108, Ala-121–Cys-168, and His-183–Cys-234. Residues Glu-269–Ser-295 are disordered. The region spanning Ala-395 to Asp-494 is the Ras-associating domain. 2 short sequence motifs (LXXLL motif) span residues Leu-555 to Leu-559 and Leu-574 to Leu-578. The DAGKc domain maps to Pro-584–Ala-721. The tract at residues Pro-908–Arg-942 is disordered. Residues His-911 to Gly-924 show a composition bias toward basic residues. A compositionally biased stretch (low complexity) spans Asp-932–Arg-942.

This sequence belongs to the eukaryotic diacylglycerol kinase family. Interacts with RHOA (constitutively activated, GTP-bound); the interaction inhibits DGKQ. Interacts with PRKCE. Interacts with PRKCH. Interacts with PLCB1. Interacts with NR5A1; the interaction requires both LXXLL motifs in DGKQ and is required for full phosphatidic acid-mediated activation of NR5A1. In terms of processing, phosphorylated by PRKCE and PRKCH in vitro.

Its subcellular location is the cytoplasm. The protein resides in the cytosol. It localises to the cell membrane. The protein localises to the synapse. It is found in the cytoskeleton. Its subcellular location is the nucleus. The protein resides in the nucleus speckle. It localises to the nucleus matrix. The enzyme catalyses a 1,2-diacyl-sn-glycerol + ATP = a 1,2-diacyl-sn-glycero-3-phosphate + ADP + H(+). The catalysed reaction is a 1-O-alkyl-sn-glycerol + ATP = a 1-O-alkyl-sn-glycero-3-phosphate + ADP + H(+). It catalyses the reaction 1-O-alkyl-2-acyl-sn-glycerol + ATP = 1-O-alkyl-2-acyl-sn-glycero-3-phosphate + ADP + H(+). It carries out the reaction 1,2-di-(9Z-octadecenoyl)-sn-glycerol + ATP = 1,2-di-(9Z-octadecenoyl)-sn-glycero-3-phosphate + ADP + H(+). The enzyme catalyses 1-O-hexadecyl-sn-glycerol + ATP = 1-O-hexadecyl-sn-glycero-3-phosphate + ADP + H(+). The catalysed reaction is 1-O-hexadecyl-2-acetyl-sn-glycerol + ATP = 1-O-hexadecyl-2-acetyl-sn-glycero-3-phosphate + ADP + H(+). It catalyses the reaction 1-octadecanoyl-2-(5Z,8Z,11Z,14Z-eicosatetraenoyl)-sn-glycerol + ATP = 1-octadecanoyl-2-(5Z,8Z,11Z,14Z-eicosatetraenoyl)-sn-glycero-3-phosphate + ADP + H(+). Its pathway is lipid metabolism; glycerolipid metabolism. Activated by phosphatidylserine. In terms of biological role, diacylglycerol kinase that converts diacylglycerol/DAG into phosphatidic acid/phosphatidate/PA and regulates the respective levels of these two bioactive lipids. Thereby, acts as a central switch between the signaling pathways activated by these second messengers with different cellular targets and opposite effects in numerous biological processes. Within the adrenocorticotropic hormone signaling pathway, produces phosphatidic acid which in turn activates NR5A1 and subsequent steroidogenic gene transcription. Also functions downstream of the nerve growth factor signaling pathway being specifically activated in the nucleus by the growth factor. Through its diacylglycerol activity also regulates synaptic vesicle endocytosis. In Homo sapiens (Human), this protein is Diacylglycerol kinase theta.